Reading from the N-terminus, the 233-residue chain is Protein TIPIN homolog (233 aa).

Over residues Met1–Asp14 the composition is skewed to acidic residues. Disordered regions lie at residues Met1–Glu39 and Gly134–Trp233. 2 stretches are compositionally biased toward basic and acidic residues: residues Asp163–Glu190 and Glu197–Ala216. Acidic residues predominate over residues Ala217–Gly227.

This sequence belongs to the CSM3 family.

The protein resides in the cytoplasm. Its subcellular location is the nucleus. Functionally, required for normal progression of S-phase. Important for cell survival after DNA damage or replication stress. The chain is Protein TIPIN homolog from Caenorhabditis elegans.